Consider the following 217-residue polypeptide: Somatotropin (217 aa).

The N-terminal stretch at 1–26 (MATGSHTTTLLLAVALLGLPWPQEAG) is a signal peptide. A Zn(2+)-binding site is contributed by His-46. Cysteines 79 and 190 form a disulfide. Glu-199 is a Zn(2+) binding site. Cys-207 and Cys-215 are disulfide-bonded.

Belongs to the somatotropin/prolactin family.

It is found in the secreted. Plays an important role in growth control. Its major role in stimulating body growth is to stimulate the liver and other tissues to secrete IGF1. It stimulates both the differentiation and proliferation of myoblasts. It also stimulates amino acid uptake and protein synthesis in muscle and other tissues. This chain is Somatotropin (GH1), found in Galago senegalensis (Northern lesser bushbaby).